The primary structure comprises 308 residues: Aspartate carbamoyltransferase catalytic subunit (308 aa).

Carbamoyl phosphate contacts are provided by Arg55 and Thr56. Lys83 lines the L-aspartate pocket. Residues Arg105, His133, and Gln136 each contribute to the carbamoyl phosphate site. Arg166 and Arg223 together coordinate L-aspartate. Carbamoyl phosphate is bound by residues Gly264 and Pro265.

The protein belongs to the aspartate/ornithine carbamoyltransferase superfamily. ATCase family. Heterododecamer (2C3:3R2) of six catalytic PyrB chains organized as two trimers (C3), and six regulatory PyrI chains organized as three dimers (R2).

It carries out the reaction carbamoyl phosphate + L-aspartate = N-carbamoyl-L-aspartate + phosphate + H(+). Its pathway is pyrimidine metabolism; UMP biosynthesis via de novo pathway; (S)-dihydroorotate from bicarbonate: step 2/3. Catalyzes the condensation of carbamoyl phosphate and aspartate to form carbamoyl aspartate and inorganic phosphate, the committed step in the de novo pyrimidine nucleotide biosynthesis pathway. This is Aspartate carbamoyltransferase catalytic subunit from Salinispora arenicola (strain CNS-205).